The following is a 497-amino-acid chain: Pentatricopeptide repeat-containing protein At2g36240 (497 aa).

PPR repeat units lie at residues 156 to 186 (LEPI…MKRL), 192 to 226 (NVGV…RAKP), 227 to 261 (DVCT…GCEP), 262 to 296 (NVVS…GCRF), 297 to 331 (SEAT…RVLP), 332 to 366 (SEFD…GQTP), 367 to 401 (CFIA…GILP), 402 to 436 (DSVT…GYEP), and 437 to 471 (DETT…DMLP).

Belongs to the PPR family. P subfamily.

The chain is Pentatricopeptide repeat-containing protein At2g36240 from Arabidopsis thaliana (Mouse-ear cress).